The primary structure comprises 450 residues: Keratin, type I cytoskeletal 25 (450 aa).

Residues 1–24 are disordered; sequence MSLRLPSGSRRAGPRPTTGSLRLS. The segment at 1-78 is head; it reads MSLRLPSGSR…MNEGGLLSGN (78 aa). The interval 79 to 114 is coil 1A; sequence EKVTMQNLNDRLASYLENVRALEEANADLEQKIKGW. The region spanning 79–394 is the IF rod domain; it reads EKVTMQNLND…LLIGGDDGAC (316 aa). Residues 115–136 are linker 1; the sequence is YEKFGPGSCRGLDHDYSRYLPI. Positions 137–228 are coil 1B; the sequence is IEDLKNQIIA…KNHKEEMQVL (92 aa). The interval 229 to 251 is linker 12; the sequence is QCAAGGNVNVEMNAAPGVDLTVL. The segment at 252 to 390 is coil 2; the sequence is LNNMRAEYEA…ETYCLLIGGD (139 aa). The tail stretch occupies residues 391 to 450; the sequence is DGACKSGGYKSKDYAAGNMGNQMKDPIRAIVVKKVLEEVDQRSKVLTTRLHSLEEKSQSN. S442 is modified (phosphoserine).

The protein belongs to the intermediate filament family. Heterodimer of a type I and a type II keratin. Heterodimer with type II keratin KRT5 leading to the formation of keratin intermediate filament (KIF) network. Interacts with KRT6A to form filaments. As to expression, expressed in skin and wool follicle. Expression localized to the inner root sheath of wool follicle.

The protein resides in the cytoplasm. Its function is as follows. Essential for the proper assembly of type I and type II keratin protein complexes and formation of keratin intermediate filaments in the inner root sheath (irs). Plays a role in the cytoskeleton organization. The protein is Keratin, type I cytoskeletal 25 of Ovis aries (Sheep).